Consider the following 249-residue polypeptide: ATP synthase subunit a (249 aa).

5 helical membrane passes run 33 to 53 (GQVI…SIAA), 92 to 112 (LPFI…GALI), 131 to 151 (INTT…AGIS), 196 to 216 (LVVA…LMAL), and 217 to 237 (GLFT…AYIH).

The protein belongs to the ATPase A chain family. As to quaternary structure, F-type ATPases have 2 components, CF(1) - the catalytic core - and CF(0) - the membrane proton channel. CF(1) has five subunits: alpha(3), beta(3), gamma(1), delta(1), epsilon(1). CF(0) has four main subunits: a, b, b' and c.

Its subcellular location is the cellular thylakoid membrane. Functionally, key component of the proton channel; it plays a direct role in the translocation of protons across the membrane. The sequence is that of ATP synthase subunit a from Microcystis aeruginosa (strain NIES-843 / IAM M-2473).